A 546-amino-acid chain; its full sequence is Arginine--tRNA ligase (546 aa).

The 'HIGH' region signature appears at 122-132 (ANPTGPFTVGH).

The protein belongs to the class-I aminoacyl-tRNA synthetase family. In terms of assembly, monomer.

It is found in the cytoplasm. The enzyme catalyses tRNA(Arg) + L-arginine + ATP = L-arginyl-tRNA(Arg) + AMP + diphosphate. This chain is Arginine--tRNA ligase (argS), found in Thermotoga maritima (strain ATCC 43589 / DSM 3109 / JCM 10099 / NBRC 100826 / MSB8).